We begin with the raw amino-acid sequence, 431 residues long: Lipoyl synthase 2, mitochondrial (431 aa).

The segment at 21 to 43 (SPLGKLQEERGEGVAKDPKKDKQ) is disordered. A compositionally biased stretch (basic and acidic residues) spans 26-40 (LQEERGEGVAKDPKK). [4Fe-4S] cluster is bound by residues C127, C132, C138, C159, C163, C166, and S375. The Radical SAM core domain maps to 142 to 364 (DEEEGTATAT…EEEAMAMGFL (223 aa)).

This sequence belongs to the radical SAM superfamily. Lipoyl synthase family. The cofactor is [4Fe-4S] cluster.

The protein resides in the mitochondrion. It carries out the reaction [[Fe-S] cluster scaffold protein carrying a second [4Fe-4S](2+) cluster] + N(6)-octanoyl-L-lysyl-[protein] + 2 oxidized [2Fe-2S]-[ferredoxin] + 2 S-adenosyl-L-methionine + 4 H(+) = [[Fe-S] cluster scaffold protein] + N(6)-[(R)-dihydrolipoyl]-L-lysyl-[protein] + 4 Fe(3+) + 2 hydrogen sulfide + 2 5'-deoxyadenosine + 2 L-methionine + 2 reduced [2Fe-2S]-[ferredoxin]. Its pathway is protein modification; protein lipoylation via endogenous pathway; protein N(6)-(lipoyl)lysine from octanoyl-[acyl-carrier-protein]: step 2/2. Its function is as follows. Catalyzes the radical-mediated insertion of two sulfur atoms into the C-6 and C-8 positions of the octanoyl moiety bound to the lipoyl domains of lipoate-dependent enzymes, thereby converting the octanoylated domains into lipoylated derivatives. In Trypanosoma cruzi (strain CL Brener), this protein is Lipoyl synthase 2, mitochondrial.